Consider the following 169-residue polypeptide: ATP synthase subunit b (169 aa).

The chain crosses the membrane as a helical span at residues 11 to 31; it reads IPSFIAQIVNFGLLLGLLYLF.

It belongs to the ATPase B chain family. As to quaternary structure, F-type ATPases have 2 components, F(1) - the catalytic core - and F(0) - the membrane proton channel. F(1) has five subunits: alpha(3), beta(3), gamma(1), delta(1), epsilon(1). F(0) has three main subunits: a(1), b(2) and c(10-14). The alpha and beta chains form an alternating ring which encloses part of the gamma chain. F(1) is attached to F(0) by a central stalk formed by the gamma and epsilon chains, while a peripheral stalk is formed by the delta and b chains.

Its subcellular location is the cell membrane. Its function is as follows. F(1)F(0) ATP synthase produces ATP from ADP in the presence of a proton or sodium gradient. F-type ATPases consist of two structural domains, F(1) containing the extramembraneous catalytic core and F(0) containing the membrane proton channel, linked together by a central stalk and a peripheral stalk. During catalysis, ATP synthesis in the catalytic domain of F(1) is coupled via a rotary mechanism of the central stalk subunits to proton translocation. Component of the F(0) channel, it forms part of the peripheral stalk, linking F(1) to F(0). The sequence is that of ATP synthase subunit b from Dehalococcoides mccartyi (strain ATCC BAA-2100 / JCM 16839 / KCTC 5957 / BAV1).